The following is a 156-amino-acid chain: Small ribosomal subunit protein uS7 (156 aa).

It belongs to the universal ribosomal protein uS7 family. As to quaternary structure, part of the 30S ribosomal subunit. Contacts proteins S9 and S11.

Its function is as follows. One of the primary rRNA binding proteins, it binds directly to 16S rRNA where it nucleates assembly of the head domain of the 30S subunit. Is located at the subunit interface close to the decoding center, probably blocks exit of the E-site tRNA. The protein is Small ribosomal subunit protein uS7 of Shewanella sp. (strain ANA-3).